Here is an 879-residue protein sequence, read N- to C-terminus: Interference hedgehog (879 aa).

The signal sequence occupies residues 1-20 (MTLLTSSLLLFSLLTSRLEA). At 21–703 (IPVLEKSPAH…ETFNMSPMLT (683 aa)) the chain is on the extracellular side. Ig-like C2-type domains follow at residues 45 to 142 (PGVR…IARL), 132 to 232 (PLVV…ERIQ), 252 to 340 (PHLL…YIKV), and 346 to 432 (PQIV…LQVN). Intrachain disulfides connect Cys68/Cys126, Cys173/Cys220, Cys276/Cys324, and Cys367/Cys414. N-linked (GlcNAc...) asparagine glycans are attached at residues Asn102 and Asn209. Residues 426–467 (GTLLQVNPKQIQEPRESGGTHRPKPNQGSKQKQMYPPSPPNV) are disordered. 2 Fibronectin type-III domains span residues 461–567 (PPSP…LQPG) and 575–670 (VPEL…TQRP). An N-linked (GlcNAc...) asparagine glycan is attached at Asn466. Arg497, Lys501, Lys503, and Arg541 together coordinate heparin. Asn557 is a glycosylation site (N-linked (GlcNAc...) asparagine). The tract at residues 662–698 (LKQGRTQRPKTSTTEEPTLQMGDRDTTTPSHNETFNM) is disordered. Polar residues-rich tracts occupy residues 665 to 678 (GRTQ…TEEP) and 688 to 698 (TTPSHNETFNM). Residue Asn693 is glycosylated (N-linked (GlcNAc...) asparagine). Residues 704 to 724 (GTLGGGAVLTLLLISICLCVC) traverse the membrane as a helical segment. The Cytoplasmic segment spans residues 725–879 (RRRSSRSRGN…SSGSLNSVGV (155 aa)). Positions 728-879 (SSRSRGNNPN…SSGSLNSVGV (152 aa)) are disordered. 2 stretches are compositionally biased toward low complexity: residues 822–836 (RAGG…NNNN) and 863–879 (SSRS…SVGV).

It belongs to the immunoglobulin superfamily. IHOG family. Homodimer. Heterotetramer; 2 iHog chains bind 2 hh chains when facilitated by heparin, heparin is required to promote high-affinity interactions between hh and iHog.

It is found in the membrane. Mediates response to the active Hedgehog (Hh) protein signal in embryos, functioning upstream or at the level of patched (ptc). This Drosophila erecta (Fruit fly) protein is Interference hedgehog.